The chain runs to 63 residues: 2-hydroxymuconate tautomerase (63 aa).

The active-site Proton acceptor; via imino nitrogen is the proline 2.

The protein belongs to the 4-oxalocrotonate tautomerase family. As to quaternary structure, homohexamer.

It carries out the reaction (2Z,4E)-2-hydroxyhexa-2,4-dienedioate = (3E)-2-oxohex-3-enedioate. Its pathway is aromatic compound metabolism; salicylate degradation. In terms of biological role, catalyzes the ketonization of 2-hydroxymuconate stereoselectively to yield 2-oxo-3-hexenedioate. This Pseudomonas fluorescens protein is 2-hydroxymuconate tautomerase (nahJ).